A 701-amino-acid polypeptide reads, in one-letter code: MARTTPISRYRNIGIVAHVDAGKTTTTERVLFYTGKSHKMGEVHDGAATTDWMVQEQERGITITSAAITAFWKGSEKQYKDEHRFNVIDTPGHVDFTIEVERSLRVLDGAVVVFCGTSGVEPQSETVWRQANKYGVPRLVYVNKMDRAGANFLRVIGQIKQRLGHTPVPIQLAIGSEDNFQGQIDLLTMEAVYWNDADKGMVPVRKPIPAELQELADEWRNNMVEAAAEANEELMNKYLEGEELTNVEIKAALRQRTIAGEIVLAVCGSSFKNKGVPLVLDAVIDYLPAPVDIPAIKGTDPDDETIELERHADDAEPFSALAFKIATDPFVGTLTFVRVYSGVLNSGDGVINSVKGKKERVGRMVQMHANAREEIKEVRAGDIAALIGMKDVTTGETLCNADKPIILVRMDFPEPVISVAVEPKTKDDQEKMGIALGKLAQEDPSFRVKTDEETGQTIISGMGELHLDILVDRMRREFNVEANIGKPQVSYRERITKNCEIEGKFVRQSGGRGQFGHCWIRFAPADEGQEGLQFVNEVVGGVVPKEYIPAIQKGIEEQMKNGVVAGYPLIGLKATVFDGSYHDVDSNEMAFKVAASMATKQLAQKGGGELLEPIMAVEVVTPEDYMGDVMGDLNRRRGMILGMEDTVSGKVIRAEVPLGEMFGYATDVRSMSQGRASYSMEFKKYNTAPAHIAETVSKKQG.

The tr-type G domain occupies 8–291 (SRYRNIGIVA…AVIDYLPAPV (284 aa)). GTP contacts are provided by residues 17–24 (AHVDAGKT), 89–93 (DTPGH), and 143–146 (NKMD).

It belongs to the TRAFAC class translation factor GTPase superfamily. Classic translation factor GTPase family. EF-G/EF-2 subfamily.

Its subcellular location is the cytoplasm. Catalyzes the GTP-dependent ribosomal translocation step during translation elongation. During this step, the ribosome changes from the pre-translocational (PRE) to the post-translocational (POST) state as the newly formed A-site-bound peptidyl-tRNA and P-site-bound deacylated tRNA move to the P and E sites, respectively. Catalyzes the coordinated movement of the two tRNA molecules, the mRNA and conformational changes in the ribosome. This is Elongation factor G from Pseudomonas fluorescens (strain SBW25).